Here is a 411-residue protein sequence, read N- to C-terminus: Adenylosuccinate synthetase (411 aa).

GTP is bound by residues 11–17 (GDEGKGK) and 39–41 (GHT). The Proton acceptor role is filled by D12. Positions 12 and 39 each coordinate Mg(2+). Residues 12-15 (DEGK), 37-40 (NAGH), T121, R135, Q215, T230, and R294 contribute to the IMP site. H40 (proton donor) is an active-site residue. 290–296 (TTTKRPR) contacts substrate. Residues R296, 322 to 324 (KLD), and 400 to 402 (STS) each bind GTP.

This sequence belongs to the adenylosuccinate synthetase family. As to quaternary structure, homodimer. Mg(2+) serves as cofactor.

The protein localises to the cytoplasm. The catalysed reaction is IMP + L-aspartate + GTP = N(6)-(1,2-dicarboxyethyl)-AMP + GDP + phosphate + 2 H(+). The protein operates within purine metabolism; AMP biosynthesis via de novo pathway; AMP from IMP: step 1/2. In terms of biological role, plays an important role in the de novo pathway of purine nucleotide biosynthesis. Catalyzes the first committed step in the biosynthesis of AMP from IMP. The polypeptide is Adenylosuccinate synthetase (Helicobacter acinonychis (strain Sheeba)).